The sequence spans 428 residues: Adenylosuccinate synthetase (428 aa).

GTP contacts are provided by residues 12-18 and 40-42; these read GDEGKGK and GHT. Catalysis depends on D13, which acts as the Proton acceptor. Mg(2+)-binding residues include D13 and G40. Residues 13 to 16, 38 to 41, T130, R144, Q225, T240, and R304 contribute to the IMP site; these read DEGK and NAGH. H41 serves as the catalytic Proton donor. 300–306 contacts substrate; it reads VTTGRSR. GTP-binding positions include R306, 332–334, and 414–416; these read KID and GVG.

It belongs to the adenylosuccinate synthetase family. As to quaternary structure, homodimer. Requires Mg(2+) as cofactor.

It localises to the cytoplasm. It catalyses the reaction IMP + L-aspartate + GTP = N(6)-(1,2-dicarboxyethyl)-AMP + GDP + phosphate + 2 H(+). It functions in the pathway purine metabolism; AMP biosynthesis via de novo pathway; AMP from IMP: step 1/2. Plays an important role in the de novo pathway of purine nucleotide biosynthesis. Catalyzes the first committed step in the biosynthesis of AMP from IMP. This chain is Adenylosuccinate synthetase, found in Clostridium botulinum (strain Eklund 17B / Type B).